Here is a 755-residue protein sequence, read N- to C-terminus: Photosystem I P700 chlorophyll a apoprotein A1 (755 aa).

8 helical membrane-spanning segments follow: residues 72–95 (IFSA…FHGA), 158–181 (LYCT…FHYH), 197–221 (LNHH…HVSL), 297–315 (TAHH…GHMY), 352–375 (WHAQ…QHMY), 391–417 (LSLF…IFMV), 439–461 (AIIS…LYVH), and 536–554 (FMVH…LILL). Residues cysteine 578 and cysteine 587 each coordinate [4Fe-4S] cluster. 2 consecutive transmembrane segments (helical) span residues 594-615 (HVFL…HFSW) and 669-691 (LSAY…MFLF). Histidine 680 serves as a coordination point for chlorophyll a'. Methionine 688 and tyrosine 696 together coordinate chlorophyll a. Residue tryptophan 697 participates in phylloquinone binding. A helical membrane pass occupies residues 729–749 (AVGVAHYLLGGIATTWAFFLA).

It belongs to the PsaA/PsaB family. The PsaA/B heterodimer binds the P700 chlorophyll special pair and subsequent electron acceptors. PSI consists of a core antenna complex that captures photons, and an electron transfer chain that converts photonic excitation into a charge separation. The cyanobacterial PSI reaction center is composed of one copy each of PsaA,B,C,D,E,F,I,J,K,L,M and X, and forms trimeric complexes. PSI electron transfer chain: 5 chlorophyll a, 1 chlorophyll a', 2 phylloquinones and 3 4Fe-4S clusters. PSI core antenna: 90 chlorophyll a, 22 carotenoids, 3 phospholipids and 1 galactolipid. P700 is a chlorophyll a/chlorophyll a' dimer, A0 is one or more chlorophyll a, A1 is one or both phylloquinones and FX is a shared 4Fe-4S iron-sulfur center. serves as cofactor.

The protein localises to the cellular thylakoid membrane. It catalyses the reaction reduced [plastocyanin] + hnu + oxidized [2Fe-2S]-[ferredoxin] = oxidized [plastocyanin] + reduced [2Fe-2S]-[ferredoxin]. Functionally, psaA and PsaB bind P700, the primary electron donor of photosystem I (PSI), as well as the electron acceptors A0, A1 and FX. PSI is a plastocyanin/cytochrome c6-ferredoxin oxidoreductase, converting photonic excitation into a charge separation, which transfers an electron from the donor P700 chlorophyll pair to the spectroscopically characterized acceptors A0, A1, FX, FA and FB in turn. Oxidized P700 is reduced on the lumenal side of the thylakoid membrane by plastocyanin or cytochrome c6. The sequence is that of Photosystem I P700 chlorophyll a apoprotein A1 from Thermostichus vulcanus (Synechococcus vulcanus).